An 856-amino-acid chain; its full sequence is Bifunctional uridylyltransferase/uridylyl-removing enzyme (856 aa).

Residues 1-320 form a uridylyltransferase region; that stretch reads MTLSAAPLQH…YCQVPRVTQH (320 aa). Residues 321–678 are uridylyl-removing; that stretch reads ISEYFHAVNG…ARLADDHEGL (358 aa). Positions 439–561 constitute an HD domain; sequence VDEHILMVVR…VRTPRRLAAL (123 aa). ACT domains lie at 679-760 and 788-856; these read QVLI…LPPQ and ILSI…ALRI.

The protein belongs to the GlnD family. Mg(2+) serves as cofactor.

The enzyme catalyses [protein-PII]-L-tyrosine + UTP = [protein-PII]-uridylyl-L-tyrosine + diphosphate. The catalysed reaction is [protein-PII]-uridylyl-L-tyrosine + H2O = [protein-PII]-L-tyrosine + UMP + H(+). Uridylyltransferase (UTase) activity is inhibited by glutamine, while glutamine activates uridylyl-removing (UR) activity. Functionally, modifies, by uridylylation and deuridylylation, the PII regulatory proteins (GlnB and homologs), in response to the nitrogen status of the cell that GlnD senses through the glutamine level. Under low glutamine levels, catalyzes the conversion of the PII proteins and UTP to PII-UMP and PPi, while under higher glutamine levels, GlnD hydrolyzes PII-UMP to PII and UMP (deuridylylation). Thus, controls uridylylation state and activity of the PII proteins, and plays an important role in the regulation of nitrogen assimilation and metabolism. The chain is Bifunctional uridylyltransferase/uridylyl-removing enzyme from Chromobacterium violaceum (strain ATCC 12472 / DSM 30191 / JCM 1249 / CCUG 213 / NBRC 12614 / NCIMB 9131 / NCTC 9757 / MK).